Consider the following 98-residue polypeptide: Tax1-binding protein 3 (98 aa).

Ser-2 carries the N-acetylserine modification. One can recognise a PDZ domain in the interval 12-87 (VVQRVEIHKL…VVRLLVTRQS (76 aa)).

Interacts (via its PDZ domain) with GLS2. Interacts (via its PDZ domain) with RTKN (via the C-terminal region); this interaction facilitates Rho-mediated activation of the FOS serum response element (SRE). Interacts (via PDZ domain) with ARHGEF16. Interacts (via PDZ domain) with KCNJ4 (via C-terminus). Competes with LIN7A for KCNJ4 binding. Interacts (via its PDZ domain) with CTNNB1; this interaction inhibits the transcriptional activity of CTNNB1. Interacts with ADGRB2. As to expression, detected in kidney distal convoluted tubules (at protein level).

It localises to the cytoplasm. The protein resides in the nucleus. It is found in the cell membrane. Functionally, may regulate a number of protein-protein interactions by competing for PDZ domain binding sites. Binds CTNNB1 and may thereby act as an inhibitor of the Wnt signaling pathway. Competes with LIN7A for KCNJ4 binding, and thereby promotes KCNJ4 internalization. May play a role in the Rho signaling pathway. The chain is Tax1-binding protein 3 from Rattus norvegicus (Rat).